A 123-amino-acid polypeptide reads, in one-letter code: Transmembrane protein 80 (123 aa).

The next 4 helical transmembrane spans lie at 2-22 (LFHL…LMIV), 35-55 (LALD…QLYL), 68-88 (LAAS…FLLW), and 102-122 (VLLV…ADFI).

It localises to the membrane. Its subcellular location is the cell projection. The protein localises to the cilium. The sequence is that of Transmembrane protein 80 (Tmem80) from Mus musculus (Mouse).